The primary structure comprises 206 residues: Large ribosomal subunit protein uL4 (206 aa).

A disordered region spans residues 46–95 (GNRAQKTRAEVKHSTKKPWRQKGTGRARSGMTSSPLWRKGGRAFPNKPDE). Residues 59-70 (STKKPWRQKGTG) show a composition bias toward basic residues.

Belongs to the universal ribosomal protein uL4 family. In terms of assembly, part of the 50S ribosomal subunit.

Functionally, one of the primary rRNA binding proteins, this protein initially binds near the 5'-end of the 23S rRNA. It is important during the early stages of 50S assembly. It makes multiple contacts with different domains of the 23S rRNA in the assembled 50S subunit and ribosome. In terms of biological role, forms part of the polypeptide exit tunnel. This is Large ribosomal subunit protein uL4 from Neisseria meningitidis serogroup C (strain 053442).